The sequence spans 289 residues: 4-diphosphocytidyl-2-C-methyl-D-erythritol kinase (289 aa).

The active site involves Lys-11. Residue Pro-93 to Ala-103 coordinates ATP. The active site involves Asp-135.

This sequence belongs to the GHMP kinase family. IspE subfamily.

The catalysed reaction is 4-CDP-2-C-methyl-D-erythritol + ATP = 4-CDP-2-C-methyl-D-erythritol 2-phosphate + ADP + H(+). It participates in isoprenoid biosynthesis; isopentenyl diphosphate biosynthesis via DXP pathway; isopentenyl diphosphate from 1-deoxy-D-xylulose 5-phosphate: step 3/6. Functionally, catalyzes the phosphorylation of the position 2 hydroxy group of 4-diphosphocytidyl-2C-methyl-D-erythritol. The sequence is that of 4-diphosphocytidyl-2-C-methyl-D-erythritol kinase from Thermoanaerobacter pseudethanolicus (strain ATCC 33223 / 39E) (Clostridium thermohydrosulfuricum).